The primary structure comprises 329 residues: Transaldolase (329 aa).

Lysine 136 acts as the Schiff-base intermediate with substrate in catalysis.

This sequence belongs to the transaldolase family. Type 1 subfamily. In terms of assembly, homodimer.

The protein localises to the cytoplasm. It carries out the reaction D-sedoheptulose 7-phosphate + D-glyceraldehyde 3-phosphate = D-erythrose 4-phosphate + beta-D-fructose 6-phosphate. It participates in carbohydrate degradation; pentose phosphate pathway; D-glyceraldehyde 3-phosphate and beta-D-fructose 6-phosphate from D-ribose 5-phosphate and D-xylulose 5-phosphate (non-oxidative stage): step 2/3. Its function is as follows. Transaldolase is important for the balance of metabolites in the pentose-phosphate pathway. The protein is Transaldolase of Methylococcus capsulatus (strain ATCC 33009 / NCIMB 11132 / Bath).